We begin with the raw amino-acid sequence, 256 residues long: 2,3,4,5-tetrahydropyridine-2,6-dicarboxylate N-acetyltransferase (256 aa).

It belongs to the transferase hexapeptide repeat family. DapH subfamily.

The enzyme catalyses (S)-2,3,4,5-tetrahydrodipicolinate + acetyl-CoA + H2O = L-2-acetamido-6-oxoheptanedioate + CoA. Its pathway is amino-acid biosynthesis; L-lysine biosynthesis via DAP pathway; LL-2,6-diaminopimelate from (S)-tetrahydrodipicolinate (acetylase route): step 1/3. Catalyzes the transfer of an acetyl group from acetyl-CoA to tetrahydrodipicolinate. The protein is 2,3,4,5-tetrahydropyridine-2,6-dicarboxylate N-acetyltransferase of Lactococcus lactis subsp. cremoris (strain MG1363).